The sequence spans 154 residues: Peptide deformylase (154 aa).

C90 and H132 together coordinate Fe cation. E133 is a catalytic residue. H136 serves as a coordination point for Fe cation.

The protein belongs to the polypeptide deformylase family. Requires Fe(2+) as cofactor.

The catalysed reaction is N-terminal N-formyl-L-methionyl-[peptide] + H2O = N-terminal L-methionyl-[peptide] + formate. Functionally, removes the formyl group from the N-terminal Met of newly synthesized proteins. Requires at least a dipeptide for an efficient rate of reaction. N-terminal L-methionine is a prerequisite for activity but the enzyme has broad specificity at other positions. This Halothermothrix orenii (strain H 168 / OCM 544 / DSM 9562) protein is Peptide deformylase.